The sequence spans 124 residues: Putative calmodulin-3 (124 aa).

4 EF-hand domains span residues 1–18 (GCIT…LGQN), 19–54 (PTEA…KIKD), 56–91 (DFEE…LGEK), and 92–124 (LTDE…MMAK). Ca(2+) contacts are provided by Cys2, Glu7, Asp32, Asp34, Asn36, Thr38, Glu43, Asp69, Asp71, Asn73, and Glu80. Position 91 is an N6,N6,N6-trimethyllysine (Lys91). 5 residues coordinate Ca(2+): Asp105, Asp107, Asp109, Gln111, and Glu116.

The protein belongs to the calmodulin family. As to expression, not detected in the organs tested.

In terms of biological role, calmodulin mediates the control of a large number of enzymes, ion channels and other proteins by Ca(2+). Among the enzymes to be stimulated by the calmodulin-Ca(2+) complex are a number of protein kinases and phosphatases. In Solanum tuberosum (Potato), this protein is Putative calmodulin-3 (PCM3).